The sequence spans 538 residues: uncharacterized protein (538 aa).

An N-terminal signal peptide occupies residues 1–17; sequence MNLQILLLLLLFCHVAA. An N-linked (GlcNAc...) asparagine glycan is attached at Asn115.

This is an uncharacterized protein from Caenorhabditis elegans.